Reading from the N-terminus, the 145-residue chain is Peptide methionine sulfoxide reductase MsrB (145 aa).

The MsrB domain maps to 6–129 (KNERLKQLTD…NSAALRFIPV (124 aa)). Catalysis depends on Cys118, which acts as the Nucleophile.

Belongs to the MsrB Met sulfoxide reductase family.

It carries out the reaction L-methionyl-[protein] + [thioredoxin]-disulfide + H2O = L-methionyl-(R)-S-oxide-[protein] + [thioredoxin]-dithiol. In Listeria welshimeri serovar 6b (strain ATCC 35897 / DSM 20650 / CCUG 15529 / CIP 8149 / NCTC 11857 / SLCC 5334 / V8), this protein is Peptide methionine sulfoxide reductase MsrB.